A 201-amino-acid polypeptide reads, in one-letter code: Large ribosomal subunit protein bL25 (201 aa).

Belongs to the bacterial ribosomal protein bL25 family. CTC subfamily. As to quaternary structure, part of the 50S ribosomal subunit; part of the 5S rRNA/L5/L18/L25 subcomplex. Contacts the 5S rRNA. Binds to the 5S rRNA independently of L5 and L18.

Its function is as follows. This is one of the proteins that binds to the 5S RNA in the ribosome where it forms part of the central protuberance. The protein is Large ribosomal subunit protein bL25 of Thiobacillus denitrificans (strain ATCC 25259 / T1).